The sequence spans 319 residues: Cytochrome c biogenesis protein CcsA (319 aa).

Helical transmembrane passes span 9–29, 44–64, 71–91, 143–163, 225–245, 259–273, and 286–306; these read ILTH…LITL, GVIG…AYSG, LYES…FPYF, MVLG…LLVI, IISL…VWAN, TWAF…IYLH, and AIVA…VNLL.

Belongs to the CcmF/CycK/Ccl1/NrfE/CcsA family. May interact with Ccs1.

It is found in the plastid. Its subcellular location is the chloroplast thylakoid membrane. Functionally, required during biogenesis of c-type cytochromes (cytochrome c6 and cytochrome f) at the step of heme attachment. This chain is Cytochrome c biogenesis protein CcsA, found in Oenothera biennis (German evening primrose).